Consider the following 401-residue polypeptide: Renin-2 (401 aa).

A signal peptide spans 1-25 (MDRRRMPLWALLLLWSPCTFSLPTG). Residues 26–63 (TTFERIPLKKMPSVREILEERGVDMTRLSAEWDVFTKR) constitute a propeptide, activation peptide. The region spanning 83–398 (YYGEIGIGTP…DRHNNRIGFA (316 aa)) is the Peptidase A1 domain. Residue aspartate 101 is part of the active site. 2 cysteine pairs are disulfide-bonded: cysteine 114/cysteine 121 and cysteine 277/cysteine 281. The active site involves aspartate 286. A disulfide bond links cysteine 320 and cysteine 357.

It belongs to the peptidase A1 family. Dimer of a heavy chain and a light chain joined by a disulfide bond. Submandibular gland.

The protein resides in the secreted. It catalyses the reaction Cleavage of Leu-|-Xaa bond in angiotensinogen to generate angiotensin I.. Its function is as follows. Renin is a highly specific endopeptidase, related to pepsin, whose only known function is to generate angiotensin I from angiotensinogen in the plasma, initiating a cascade of reactions that produce an elevation of blood pressure and increased sodium retention by the kidney. In Mus musculus (Mouse), this protein is Renin-2.